Here is a 214-residue protein sequence, read N- to C-terminus: Large ribosomal subunit protein uL1 (214 aa).

The protein belongs to the universal ribosomal protein uL1 family. Part of the 50S ribosomal subunit.

Functionally, binds directly to 23S rRNA. Probably involved in E site tRNA release. In terms of biological role, protein L1 is also a translational repressor protein, it controls the translation of its operon by binding to its mRNA. This chain is Large ribosomal subunit protein uL1, found in Methanopyrus kandleri (strain AV19 / DSM 6324 / JCM 9639 / NBRC 100938).